Consider the following 274-residue polypeptide: ATP synthase subunit a (274 aa).

A run of 5 helical transmembrane segments spans residues 43–63 (TLNI…LLVF), 103–123 (VIAP…MMDL), 149–169 (DVSI…FYSI), 223–243 (LIFI…LSVP), and 245–265 (AIFH…LTIV).

Belongs to the ATPase A chain family. As to quaternary structure, F-type ATPases have 2 components, CF(1) - the catalytic core - and CF(0) - the membrane proton channel. CF(1) has five subunits: alpha(3), beta(3), gamma(1), delta(1), epsilon(1). CF(0) has three main subunits: a(1), b(2) and c(9-12). The alpha and beta chains form an alternating ring which encloses part of the gamma chain. CF(1) is attached to CF(0) by a central stalk formed by the gamma and epsilon chains, while a peripheral stalk is formed by the delta and b chains.

Its subcellular location is the cell inner membrane. Functionally, key component of the proton channel; it plays a direct role in the translocation of protons across the membrane. This Yersinia pestis bv. Antiqua (strain Antiqua) protein is ATP synthase subunit a.